The sequence spans 114 residues: UPF0145 protein SSO1976 (114 aa).

The protein belongs to the UPF0145 family.

The protein is UPF0145 protein SSO1976 of Saccharolobus solfataricus (strain ATCC 35092 / DSM 1617 / JCM 11322 / P2) (Sulfolobus solfataricus).